The primary structure comprises 138 residues: Transcription antitermination protein NusB (138 aa).

This sequence belongs to the NusB family.

Its function is as follows. Involved in transcription antitermination. Required for transcription of ribosomal RNA (rRNA) genes. Binds specifically to the boxA antiterminator sequence of the ribosomal RNA (rrn) operons. In Colwellia psychrerythraea (strain 34H / ATCC BAA-681) (Vibrio psychroerythus), this protein is Transcription antitermination protein NusB.